Here is a 248-residue protein sequence, read N- to C-terminus: Pyridoxine 5'-phosphate synthase (248 aa).

3-amino-2-oxopropyl phosphate is bound by residues Asn-8 and Arg-19. Catalysis depends on His-44, which acts as the Proton acceptor. 1-deoxy-D-xylulose 5-phosphate-binding residues include Arg-46 and His-51. Residue Glu-76 is the Proton acceptor of the active site. A 1-deoxy-D-xylulose 5-phosphate-binding site is contributed by Thr-106. The Proton donor role is filled by His-200. 3-amino-2-oxopropyl phosphate contacts are provided by residues Asp-201 and 223 to 224; that span reads GH.

The protein belongs to the PNP synthase family. In terms of assembly, homooctamer; tetramer of dimers.

Its subcellular location is the cytoplasm. The catalysed reaction is 3-amino-2-oxopropyl phosphate + 1-deoxy-D-xylulose 5-phosphate = pyridoxine 5'-phosphate + phosphate + 2 H2O + H(+). Its pathway is cofactor biosynthesis; pyridoxine 5'-phosphate biosynthesis; pyridoxine 5'-phosphate from D-erythrose 4-phosphate: step 5/5. Its function is as follows. Catalyzes the complicated ring closure reaction between the two acyclic compounds 1-deoxy-D-xylulose-5-phosphate (DXP) and 3-amino-2-oxopropyl phosphate (1-amino-acetone-3-phosphate or AAP) to form pyridoxine 5'-phosphate (PNP) and inorganic phosphate. This Chelativorans sp. (strain BNC1) protein is Pyridoxine 5'-phosphate synthase.